An 82-amino-acid polypeptide reads, in one-letter code: Small ribosomal subunit protein bS16 (82 aa).

It belongs to the bacterial ribosomal protein bS16 family.

This chain is Small ribosomal subunit protein bS16, found in Erwinia tasmaniensis (strain DSM 17950 / CFBP 7177 / CIP 109463 / NCPPB 4357 / Et1/99).